Here is a 393-residue protein sequence, read N- to C-terminus: NAD(P)H-quinone oxidoreductase subunit H, chloroplastic (393 aa).

This sequence belongs to the complex I 49 kDa subunit family. As to quaternary structure, NDH is composed of at least 16 different subunits, 5 of which are encoded in the nucleus.

The protein resides in the plastid. Its subcellular location is the chloroplast thylakoid membrane. It carries out the reaction a plastoquinone + NADH + (n+1) H(+)(in) = a plastoquinol + NAD(+) + n H(+)(out). The catalysed reaction is a plastoquinone + NADPH + (n+1) H(+)(in) = a plastoquinol + NADP(+) + n H(+)(out). Functionally, NDH shuttles electrons from NAD(P)H:plastoquinone, via FMN and iron-sulfur (Fe-S) centers, to quinones in the photosynthetic chain and possibly in a chloroplast respiratory chain. The immediate electron acceptor for the enzyme in this species is believed to be plastoquinone. Couples the redox reaction to proton translocation, and thus conserves the redox energy in a proton gradient. This Barbarea verna (Land cress) protein is NAD(P)H-quinone oxidoreductase subunit H, chloroplastic.